We begin with the raw amino-acid sequence, 527 residues long: uncharacterized protein (527 aa).

Disordered regions lie at residues 1–49 (MSSF…IKDE), 99–307 (DFNF…ATTT), 319–353 (TEINNNNSNSNNLPSIPIGNEKSKINDNQDEEDEN), and 382–419 (YINNDDGDDDDDDDENENENDSQPEEEYEENKQQQQQE). Acidic residues predominate over residues 8-17 (YDDESEEEDN). 2 stretches are compositionally biased toward low complexity: residues 18–44 (NNNNNNNNNNNNNNIINNNNNNNNSNN) and 99–115 (DFNFYNNNNNSNSNSNN). A compositionally biased stretch (basic and acidic residues) spans 141–150 (NEFRNPDLKN). 2 stretches are compositionally biased toward low complexity: residues 167-178 (SSQNTTTTQQSS) and 186-222 (NNNNNNNNNNNNNNNNNNNNNNNNNNNNNNNNNNSNN). The segment covering 229–248 (DDKSKKINENENTVNKKDNI) has biased composition (basic and acidic residues). Over residues 283 to 296 (LRKKLLKNQPKTKK) the composition is skewed to basic residues. Low complexity-rich tracts occupy residues 297–307 (STTTTTTATTT) and 319–330 (TEINNNNSNSNN). Positions 386-410 (DDGDDDDDDDENENENDSQPEEEYE) are enriched in acidic residues.

This is an uncharacterized protein from Dictyostelium discoideum (Social amoeba).